A 417-amino-acid polypeptide reads, in one-letter code: Gamma-glutamyl phosphate reductase (417 aa).

It belongs to the gamma-glutamyl phosphate reductase family.

Its subcellular location is the cytoplasm. The catalysed reaction is L-glutamate 5-semialdehyde + phosphate + NADP(+) = L-glutamyl 5-phosphate + NADPH + H(+). The protein operates within amino-acid biosynthesis; L-proline biosynthesis; L-glutamate 5-semialdehyde from L-glutamate: step 2/2. Catalyzes the NADPH-dependent reduction of L-glutamate 5-phosphate into L-glutamate 5-semialdehyde and phosphate. The product spontaneously undergoes cyclization to form 1-pyrroline-5-carboxylate. The chain is Gamma-glutamyl phosphate reductase from Escherichia coli O157:H7.